We begin with the raw amino-acid sequence, 397 residues long: Ubiquitin-like modifier-activating enzyme 5 (397 aa).

Residues Gly-77, Asp-98, Lys-121, Asn-144, and Asn-178 each coordinate ATP. Cys-220 and Cys-223 together coordinate Zn(2+). Cys-244 (glycyl thioester intermediate) is an active-site residue. Residues Cys-297 and Cys-302 each contribute to the Zn(2+) site. The short motif at 329–341 (VVHEDNDWGIELV) is the UFM1-interacting sequence (UIS) element. The linker stretch occupies residues 342 to 372 (SEVSEEELKAASGPVPDLPEGIKVAYTIPIT). The UFC1-binding sequence (UFC) motif lies at 382–397 (DSEQSLDELMAQMKNL).

This sequence belongs to the ubiquitin-activating E1 family. UBA5 subfamily. Homodimer; homodimerization is required for ufm1 activation. Interacts (via UIS motif) with ufm1; binds ufm1 via a trans-binding mechanism in which ufm1 interacts with distinct sites in both subunits of the uba5 homodimer. Interacts (via C-terminus) with ufc1.

The protein resides in the cytoplasm. Its subcellular location is the nucleus. The protein localises to the endoplasmic reticulum membrane. It is found in the golgi apparatus. E1-like enzyme which specifically catalyzes the first step in ufmylation. Activates ufm1 by first adenylating its C-terminal glycine residue with ATP, and thereafter linking this residue to the side chain of a cysteine residue in E1, yielding a ufm1-E1 thioester and free AMP. Activates ufm1 via a trans-binding mechanism, in which ufm1 interacts with distinct sites in both subunits of the uba5 homodimer. Trans-binding also promotes stabilization of the uba5 homodimer, and enhances ATP-binding. Transfer of ufm1 from uba5 to the E2-like enzyme UFC1 also takes place using a trans mechanism. Ufmylation plays a key role in various processes, such as ribosome recycling, response to DNA damage, interferon response or reticulophagy (also called ER-phagy). The sequence is that of Ubiquitin-like modifier-activating enzyme 5 from Xenopus laevis (African clawed frog).